The sequence spans 448 residues: tRNA modification GTPase MnmE (448 aa).

Residues Arg24, Glu81, and Lys120 each coordinate (6S)-5-formyl-5,6,7,8-tetrahydrofolate. The TrmE-type G domain occupies 216–373 (GLNVVLVGAP…LKRTLLREAG (158 aa)). Residue Asn226 participates in K(+) binding. GTP contacts are provided by residues 226–231 (NVGKSS), 245–251 (TDIAGTT), and 270–273 (DTAG). Ser230 lines the Mg(2+) pocket. Positions 245, 247, and 250 each coordinate K(+). Thr251 contributes to the Mg(2+) binding site. A (6S)-5-formyl-5,6,7,8-tetrahydrofolate-binding site is contributed by Lys448.

Belongs to the TRAFAC class TrmE-Era-EngA-EngB-Septin-like GTPase superfamily. TrmE GTPase family. As to quaternary structure, homodimer. Heterotetramer of two MnmE and two MnmG subunits. K(+) is required as a cofactor.

Its subcellular location is the cytoplasm. Functionally, exhibits a very high intrinsic GTPase hydrolysis rate. Involved in the addition of a carboxymethylaminomethyl (cmnm) group at the wobble position (U34) of certain tRNAs, forming tRNA-cmnm(5)s(2)U34. The chain is tRNA modification GTPase MnmE from Neisseria meningitidis serogroup C / serotype 2a (strain ATCC 700532 / DSM 15464 / FAM18).